Here is a 336-residue protein sequence, read N- to C-terminus: MEAIINPIITKLYEQESLTQEESQQLFDIIIRGELDPILMASALTALKIKGETPDEIAGAAKALLANANPFPRPDYDFADIVGTGGDGHNTINISTTAAFVAAACGLKVAKHGNRSVSSKSGSSDLLDSFGINLAMSAEDTRKAVDEIGVAFLFAPQYHGGVRHAMPVRQTMKTRTIFNILGPLINPARPNIELMGVYSEELVRPIAETMLQMSMKRAAVVHGSGLDEVAIHGETTVAEIKDGKITEYTLTPADFGLEPHPLEAIKGGVPEENKAIITNILTGKGTDAQLGAVAVNVALLMRLFGHEDLKANTQQAVEAMNSGEAYQLVQQLAAHA.

Residues Gly-83, 86 to 87, Thr-91, 93 to 96, 111 to 119, and Ser-123 each bind 5-phospho-alpha-D-ribose 1-diphosphate; these read GD, NIST, and KHGNRSVSS. Gly-83 lines the anthranilate pocket. Ser-95 serves as a coordination point for Mg(2+). Asn-114 is a binding site for anthranilate. Position 169 (Arg-169) interacts with anthranilate. Asp-227 and Glu-228 together coordinate Mg(2+).

Belongs to the anthranilate phosphoribosyltransferase family. Homodimer. The cofactor is Mg(2+).

It catalyses the reaction N-(5-phospho-beta-D-ribosyl)anthranilate + diphosphate = 5-phospho-alpha-D-ribose 1-diphosphate + anthranilate. It participates in amino-acid biosynthesis; L-tryptophan biosynthesis; L-tryptophan from chorismate: step 2/5. In terms of biological role, catalyzes the transfer of the phosphoribosyl group of 5-phosphorylribose-1-pyrophosphate (PRPP) to anthranilate to yield N-(5'-phosphoribosyl)-anthranilate (PRA). The protein is Anthranilate phosphoribosyltransferase of Vibrio campbellii (strain ATCC BAA-1116).